We begin with the raw amino-acid sequence, 278 residues long: Transmembrane protein 45B (278 aa).

Helical transmembrane passes span 7–27, 49–69, 95–115, 117–137, 149–169, 183–203, and 215–235; these read HALP…KYPL, IIEG…EQFV, YLFF…FNIV, LGLD…LFYF, IHSL…LEVI, LLIL…PPFG, and VMFI…ITAI. A phosphoserine mark is found at serine 273 and serine 275.

This sequence belongs to the TMEM45 family.

The protein resides in the endosome membrane. It localises to the lysosome membrane. Its subcellular location is the golgi apparatus. It is found in the trans-Golgi network membrane. Its function is as follows. Plays a role in innate immunity. The protein is Transmembrane protein 45B (Tmem45b) of Rattus norvegicus (Rat).